Here is a 25-residue protein sequence, read N- to C-terminus: Insulin mimetic protein (25 aa).

Residues 1 to 25 (TKDPELKQCKKQQKKQQQYDDDDKK) are disordered.

Glycosylated. In terms of tissue distribution, expressed in seed.

The chain is Insulin mimetic protein from Cnidoscolus quercifolius.